Here is a 400-residue protein sequence, read N- to C-terminus: WW domain-containing transcription regulator protein 1 (400 aa).

A Glycyl lysine isopeptide (Lys-Gly) (interchain with G-Cter in ubiquitin) cross-link involves residue Lys-46. The segment at 52–117 (FFKEPDSGSH…QQHAHLRQQS (66 aa)) is disordered. Residues 61-70 (HSRQSSTDSS) show a composition bias toward polar residues. Residues Ser-62 and Ser-89 each carry the phosphoserine modification. Over residues 91–110 (PASLQLGPGAGAAGSPAQQH) the composition is skewed to low complexity. Residues 124-157 (LPLPPGWEMTFTATGQRYFLNHIEKITTWQDPRK) form the WW domain. Over residues 192–211 (NHQHQQQMAPTNLSQQNHPT) the composition is skewed to polar residues. Positions 192-216 (NHQHQQQMAPTNLSQQNHPTQNPPA) are disordered. A required for interaction with PALS1 region spans residues 222–400 (PNALTTQQQQ…NKSEPFLTWL (179 aa)). Phosphoserine occurs at positions 295 and 311. The PDZ-binding motif lies at 394–400 (EPFLTWL).

Binds to SLC9A3R2 via the PDZ motif at the plasma membrane. Binds to YWHAZ in vivo and in vitro through the phosphoserine-binding motif RSHSSP. Interacts (via coiled-coil domain) with SMAD2 (via MH1 domain), SMAD3 and SMAD4. Interacts with MED15. Interacts with PAX8 and NKX2-1. Interacts with TEAD1, TEAD2, TEAD3 and TEAD4. Interacts (via WW domain) with PALS1. Interacts with LATS1. Interacts with YAP1 (when phosphorylated at 'Ser-112'). Interacts (via WW domain) with PRRG4 (via cytoplasmic domain). Interacts (via WW domain) with AMOTL2 (via PPXY motif); the interaction promotes WWTR1/TAZ localization to the cytoplasm and tight junctions, thereby inhibiting its transcriptional coactivator properties. Interacts (via WW domain) with AMOT; the interaction facilitates translocation of WWTR1/TAZ to the cytoplasm. In terms of processing, phosphorylated by LATS2 and STK3/MST2. Phosphorylation by LATS2 results in creation of 14-3-3 binding sites, retention in the cytoplasm, and functional inactivation. Phosphorylation results in the inhibition of transcriptional coactivation through YWHAZ-mediated nuclear export. Post-translationally, ubiquitinated at Lys-46; leading to proteasomal degradation. Deubiquitinated and stabilized by UCHL1 at Lys-46; leading to inhibition of osteoclastogenesis.

The protein resides in the cytoplasm. The protein localises to the nucleus. It is found in the cell membrane. Its subcellular location is the cell junction. It localises to the tight junction. Transcriptional coactivator which acts as a downstream regulatory target in the Hippo signaling pathway that plays a pivotal role in organ size control and tumor suppression by restricting proliferation and promoting apoptosis. The core of this pathway is composed of a kinase cascade wherein STK3/MST2 and STK4/MST1, in complex with its regulatory protein SAV1, phosphorylates and activates LATS1/2 in complex with its regulatory protein MOB1, which in turn phosphorylates and inactivates YAP1 oncoprotein and WWTR1/TAZ. WWTR1 enhances PAX8 and NKX2-1/TTF1-dependent gene activation. In conjunction with YAP1, involved in the regulation of TGFB1-dependent SMAD2 and SMAD3 nuclear accumulation. Plays a key role in coupling SMADs to the transcriptional machinery such as the mediator complex. Regulates embryonic stem-cell self-renewal, promotes cell proliferation and epithelial-mesenchymal transition. The sequence is that of WW domain-containing transcription regulator protein 1 from Canis lupus familiaris (Dog).